Reading from the N-terminus, the 183-residue chain is Shikimate kinase (183 aa).

14 to 19 (GAGKTT) contacts ATP. Thr-18 serves as a coordination point for Mg(2+). Residues Asp-36, Arg-60, and Gly-82 each contribute to the substrate site. ATP is bound at residue Arg-120. Position 139 (Arg-139) interacts with substrate. Residue Gln-156 coordinates ATP.

It belongs to the shikimate kinase family. As to quaternary structure, monomer. Mg(2+) serves as cofactor.

Its subcellular location is the cytoplasm. It catalyses the reaction shikimate + ATP = 3-phosphoshikimate + ADP + H(+). Its pathway is metabolic intermediate biosynthesis; chorismate biosynthesis; chorismate from D-erythrose 4-phosphate and phosphoenolpyruvate: step 5/7. Its function is as follows. Catalyzes the specific phosphorylation of the 3-hydroxyl group of shikimic acid using ATP as a cosubstrate. This Thiobacillus denitrificans (strain ATCC 25259 / T1) protein is Shikimate kinase.